Here is an 88-residue protein sequence, read N- to C-terminus: EMBRYO SURROUNDING FACTOR 1-like protein 3 (88 aa).

A signal peptide spans 1-22 (MKLSQIALICIVIASLFAMHEC). 3 disulfides stabilise this stretch: cysteine 41-cysteine 56, cysteine 54-cysteine 80, and cysteine 57-cysteine 67.

Belongs to the MEG family. In terms of tissue distribution, expressed in stems, leaves and flowers.

In Arabidopsis thaliana (Mouse-ear cress), this protein is EMBRYO SURROUNDING FACTOR 1-like protein 3 (ESFL3).